We begin with the raw amino-acid sequence, 193 residues long: MAYSWDNRVKYVVRYMYDIDNNGFLDKNDFECLAVRNTLIEGRGEFSADAYANNQKIMRNLWNEIAELADFNKDGEVTVDEFKQAVQKHCQGKKYGDFPGAFKVFIANQFKAIDVNGDGKVGLDEYRLDCITRSAFAEVKEIDDAYNKLTTEDDRKAGGLTLERYQDLYAQFISNPDESCSACYLFGPLKVVQ.

IgE-binding epitope stretches follow at residues 10–36 (KYVV…LAVR) and 49–72 (DAYA…ADFN). EF-hand domains are found at residues 16 to 40 (MYDI…NTLI), 57 to 92 (IMRN…HCQG), and 101 to 136 (AFKV…RSAF). Residues Asp18, Asp20, Asn22, Asp29, Asp70, Asn72, Asp74, Glu76, Glu81, Asp114, Asn116, Asp118, Lys120, and Glu125 each coordinate Ca(2+). The interval 130–147 (CITRSAFAEVKEIDDAYN) is igE-binding epitope.

In terms of assembly, SCPs from crayfish, lobster, and shrimp are polymorphic dimers; three isotypes (alpha-alpha, alpha-beta, and beta-beta) have been identified. As to expression, expressed in tail muscle (at protein level).

Its function is as follows. Like parvalbumins, SCPs seem to be more abundant in fast contracting muscles, but no functional relationship can be established from this distribution. The polypeptide is Sarcoplasmic calcium-binding protein, alpha chain (Penaeus vannamei (Whiteleg shrimp)).